The following is a 905-amino-acid chain: DNA mismatch repair protein MutS (905 aa).

The segment at 1 to 95 (MELSLQGSLF…PAWGHHSQLK (95 aa)) is disordered. Residues 38–50 (NLSDADLSKDALA) show a composition bias toward basic and acidic residues. Residue 721–728 (GPNASGKS) participates in ATP binding.

This sequence belongs to the DNA mismatch repair MutS family.

Functionally, this protein is involved in the repair of mismatches in DNA. It is possible that it carries out the mismatch recognition step. This protein has a weak ATPase activity. The sequence is that of DNA mismatch repair protein MutS from Synechococcus sp. (strain CC9902).